The chain runs to 245 residues: Dehydrogenase/reductase SDR family member 6 (245 aa).

NAD(+)-binding positions include 16 to 18 (QGI), D37, and D58. R144 serves as a coordination point for substrate. Y147 functions as the Proton acceptor in the catalytic mechanism. NAD(+) is bound by residues K151 and 180–184 (VDTPS). Residues R188 and R205 each contribute to the substrate site.

This sequence belongs to the short-chain dehydrogenases/reductases (SDR) family. Homotetramer.

The protein localises to the cytoplasm. It catalyses the reaction cis-4-hydroxy-L-proline + NAD(+) = 4-oxo-L-proline + NADH + H(+). It carries out the reaction (R)-3-hydroxybutanoate + NAD(+) = acetoacetate + NADH + H(+). It functions in the pathway amino-acid metabolism. It participates in siderophore biosynthesis. In terms of biological role, NAD(H)-dependent dehydrogenase/reductase with a preference for cyclic substrates. Catalyzes stereoselective conversion of 4-oxo-L-proline to cis-4-hydroxy-L-proline, likely a detoxification mechanism for ketoprolines. Mediates the formation of 2,5-dihydroxybenzoate (2,5-DHBA), a siderophore that chelates free cytoplasmic iron, thereby regulating iron transport and homeostasis while protecting cells against free radical-induced oxidative stress. The iron-siderophore complex is imported into mitochondria, providing an iron source for mitochondrial metabolic processes in particular heme synthesis. May act as a 3-hydroxybutyrate dehydrogenase. This is Dehydrogenase/reductase SDR family member 6 (bdh2) from Xenopus laevis (African clawed frog).